A 37-amino-acid chain; its full sequence is Large ribosomal subunit protein bL36c (37 aa).

Belongs to the bacterial ribosomal protein bL36 family.

It localises to the plastid. Its subcellular location is the chloroplast. The protein is Large ribosomal subunit protein bL36c of Adiantum capillus-veneris (Maidenhair fern).